The sequence spans 308 residues: uncharacterized protein (308 aa).

2 stretches are compositionally biased toward polar residues: residues 138-148 and 205-229; these read WSFTKHGSNTP and STSH…QPPS. Disordered stretches follow at residues 138–157 and 205–235; these read WSFT…PLCN and STSH…TDAS.

The protein resides in the cytoplasm. This is an uncharacterized protein from Schizosaccharomyces pombe (strain 972 / ATCC 24843) (Fission yeast).